The primary structure comprises 424 residues: GTPase Obg (424 aa).

An Obg domain is found at 1-158 (MFVDRARIYI…LWVILELKLL (158 aa)). Residues 159–330 (ADVGLIGFPN…LIYYAAQKLK (172 aa)) enclose the OBG-type G domain. Residues 165–172 (GFPNVGKS), 190–194 (FTTIN), 212–215 (DIPG), 282–285 (NKMD), and 311–313 (SAA) contribute to the GTP site. Ser172 and Thr192 together coordinate Mg(2+). The 78-residue stretch at 347 to 424 (YTAVEEEPFN…MYDLEFEYFR (78 aa)) folds into the OCT domain.

This sequence belongs to the TRAFAC class OBG-HflX-like GTPase superfamily. OBG GTPase family. In terms of assembly, monomer. Requires Mg(2+) as cofactor.

Its subcellular location is the cytoplasm. Its function is as follows. An essential GTPase which binds GTP, GDP and possibly (p)ppGpp with moderate affinity, with high nucleotide exchange rates and a fairly low GTP hydrolysis rate. Plays a role in control of the cell cycle, stress response, ribosome biogenesis and in those bacteria that undergo differentiation, in morphogenesis control. The polypeptide is GTPase Obg (Acetivibrio thermocellus (strain ATCC 27405 / DSM 1237 / JCM 9322 / NBRC 103400 / NCIMB 10682 / NRRL B-4536 / VPI 7372) (Clostridium thermocellum)).